The primary structure comprises 333 residues: 6-phosphogluconolactonase (333 aa).

The protein belongs to the cycloisomerase 2 family.

It carries out the reaction 6-phospho-D-glucono-1,5-lactone + H2O = 6-phospho-D-gluconate + H(+). Its pathway is carbohydrate degradation; pentose phosphate pathway; D-ribulose 5-phosphate from D-glucose 6-phosphate (oxidative stage): step 2/3. Functionally, catalyzes the hydrolysis of 6-phosphogluconolactone to 6-phosphogluconate. This is 6-phosphogluconolactonase from Cronobacter sakazakii (strain ATCC BAA-894) (Enterobacter sakazakii).